A 1374-amino-acid polypeptide reads, in one-letter code: MKVSDRRKFEKANFDEFESALNNKNDLVHCPSITLFESIPTEVRSFYEDEKSGLIKVVKFRTGAMDRKRSFEKIVVSVMVGKNVQKFLTFVEDEPDFQGGPIPSKYLIPKKINLMVYTLFQVHTLKFNRKDYDTLSLFYLNRGYYNELSFRVLERCHEIASARPNDSSTMRTFTDFVSGAPIVRSLQKSTIRRYGYNLAPHMFLLLHVDELSIFSAYQASLPGEKKVDTERLKRDLCPRKPIEIKYFSQICNDMMNKKDRLGDVLATAQRIRRRYNKNGSSEPRLKTLDGLTSERWIQWLGLESDYHCSFSSTRNAEDVVAGEAASSDHDQKISRVTRKRPREPKSTNDILVAGQKLFGSSFEFRDLHQLRLCHEIYMADTPSVAVQAPPGYGKTELFHLPLIALASKGDVKYVSFLFVPYTVLLANCMIRLGRCGCLNVAPVRNFIEEGCDGVTDLYVGIYDDLASTNFTDRIAAWENIVECTFRTNNVKLGYLIVDEFHNFETEVYRQSQFGGITNLDFDAFEKAIFLSGTAPEAVADAALQRIGLTGLAKKSMDINELKRSEDLSRGLSSYPTRMFNLIKEKSEVPLGHVHKIWKKVESQPEEALKLLLALFEIEPESKAIVVASTTNEVEELACSWRKYFRVVWIHGKLGAAEKVSRTKEFVTDGSMRVLIGTKLVTEGIDIKQLMMVIMLDNRLNIIELIQGVGRLRDGGLCYLLSRKNSWAARNRKGELPPIKEGCITEQVREFYGLESKKGKKGQHVGCCGSRTDLSADTVELIERMDRLAEKQATASMSIVALPSSFQESNSSDRCRKYCSSDEDSNTCIHGSANASTNATTNSSTNATTTASTNVRTSATTTASINVRTSATTTESTNSSTNATTTASTNVRTSATTTASINVRTSATTTESTNSNTSATTTESTDSNTSATTTESTDSSTNATTTASINVRTSATTTESTNSNTNATTTESTNSSTNATTTEGTNSNTSATTTASTNSSTNATTTESTNASAKEDANKDGNAEDNRFHPVTDINKESYKRKGSQMVLLERKKLKAQFPNTSENMNVLQFLGFRSDEIKHLFLYGIDVYFCPEGVFTQYGLCKGCQKMFELCVCWAGQKVSYRRMAWEALAVERMLRNDEEYKEYLEDIEPYHGDPVGYLKFFSVKRGEIYSQIQRNYAWYLAITRRRETISVLDSTRGKQGSQVFRMSGRQIKELYYKVWSNLRESKTEVLQYFLNWDEKKCREEWEAKDDTVFVEALEKVGVFQRLRSMTSAGLQGPQYVKLQFSRHHRQLRSRYELSLGMHLRDQLALGVTPSKVPHWTAFLSMLIGLFYNKTFRQKLEYLLEQISEVWLLPHWVDLANVEVLAADNTRVPC.

The segment at 321–345 (AGEAASSDHDQKISRVTRKRPREPK) is disordered. One can recognise a Helicase ATP-binding domain in the interval 375-552 (EIYMADTPSV…LQRIGLTGLA (178 aa)). An ATP-binding site is contributed by 388 to 395 (APPGYGKT). Positions 498–501 (DEFH) match the DEAH box motif. The Helicase C-terminal domain maps to 609–758 (KLLLALFEIE…EFYGLESKKG (150 aa)). The segment covering 832 to 1011 (ANASTNATTN…ATTTESTNAS (180 aa)) has biased composition (low complexity). The disordered stretch occupies residues 832–1035 (ANASTNATTN…RFHPVTDINK (204 aa)). A compositionally biased stretch (basic and acidic residues) spans 1012–1035 (AKEDANKDGNAEDNRFHPVTDINK).

Belongs to the helicase family. Yeast subtelomeric Y' repeat subfamily.

Its function is as follows. Catalyzes DNA unwinding and is involved in telomerase-independent telomere maintenance. This Saccharomyces cerevisiae (strain ATCC 204508 / S288c) (Baker's yeast) protein is Y' element ATP-dependent helicase YLL067C.